The primary structure comprises 446 residues: Delta(8)-fatty-acid desaturase (446 aa).

The 85-residue stretch at 5–89 (KKYISVGELE…LEDYLVSEIS (85 aa)) folds into the Cytochrome b5 heme-binding domain. Heme is bound by residues histidine 40 and histidine 63. The next 2 helical transmembrane spans lie at 112–132 (VIYC…GVLC) and 136–156 (LWVH…AAYL). Residues 158-162 (HDSGH) carry the Histidine box-1 motif. Transmembrane regions (helical) follow at residues 174-195 (FAQV…KWTH), 253-273 (IYLV…LLLF), 282-302 (ALNI…VSCL), and 309-329 (VLFV…FTLN). The short motif at 195 to 199 (HNAHH) is the Histidine box-2 element. The short motif at 372–376 (QLEHH) is the Histidine box-3 element.

This sequence belongs to the fatty acid desaturase type 1 family. Fe cation serves as cofactor. Expressed only in young leaves.

The protein localises to the membrane. The enzyme catalyses an N-acyl-(4R)-4-hydroxysphinganine + 2 Fe(II)-[cytochrome b5] + O2 + 2 H(+) = a (4R,8E)-4-hydroxysphingenine ceramide + 2 Fe(III)-[cytochrome b5] + 2 H2O. It catalyses the reaction an N-acyl-(4R)-4-hydroxysphinganine + 2 Fe(II)-[cytochrome b5] + O2 + 2 H(+) = a (4R,8Z)-4-hydroxysphing-8-enine ceramide + 2 Fe(III)-[cytochrome b5] + 2 H2O. Functionally, plays a major role as delta(8)-fatty-acid desaturase which introduces a double bond at the 8-position in the long-chain base (LCB) of ceramides with or without a hydroxy group at the 4-position. The enzyme produces both the 8E and 8Z isomers (in a 4:1 ratio). This structural modification contributes to the quantitative partitioning of ceramides between the two major sphingolipid classes, glucosylceramides and glycosylinositolphosphoryl ceramides. Sphingolipids are important membrane components involved in environmental stress responses, such as resistance to chilling, and act as cell signaling molecules. The protein is Delta(8)-fatty-acid desaturase (sld1) of Borago officinalis (Bourrache).